The sequence spans 366 residues: ATP-dependent 6-phosphofructokinase (366 aa).

Residues Gly-16, 78–79, and 118–121 each bind ATP; these read RE and GNGT. The disordered stretch occupies residues 74–94; it reads LGTSREKPFKPDPGEKDSEAG. The span at 77–94 shows a compositional bias: basic and acidic residues; the sequence is SREKPFKPDPGEKDSEAG. A Mg(2+)-binding site is contributed by Asn-119. Substrate contacts are provided by residues 141 to 143, Arg-178, 185 to 187, Glu-238, Arg-282, and 288 to 291; these read TID, MGH, and YLQR. The active-site Proton acceptor is Asp-143.

This sequence belongs to the phosphofructokinase type A (PFKA) family. Mixed-substrate PFK group III subfamily. As to quaternary structure, homodimer or homotetramer. Mg(2+) is required as a cofactor.

The protein localises to the cytoplasm. It catalyses the reaction beta-D-fructose 6-phosphate + ATP = beta-D-fructose 1,6-bisphosphate + ADP + H(+). Its pathway is carbohydrate degradation; glycolysis; D-glyceraldehyde 3-phosphate and glycerone phosphate from D-glucose: step 3/4. In terms of biological role, catalyzes the phosphorylation of D-fructose 6-phosphate to fructose 1,6-bisphosphate by ATP, the first committing step of glycolysis. This Spirochaeta thermophila (strain ATCC 49972 / DSM 6192 / RI 19.B1) protein is ATP-dependent 6-phosphofructokinase.